Here is a 380-residue protein sequence, read N- to C-terminus: Cytochrome b (380 aa).

Transmembrane regions (helical) follow at residues Phe34–Met54, Trp78–Ile99, Trp114–Leu134, and Phe179–Thr199. Heme b contacts are provided by His84 and His98. 2 residues coordinate heme b: His183 and His197. A ubiquinone is bound at residue His202. Transmembrane regions (helical) follow at residues Leu227–Ser247, Leu289–His309, Leu321–Ser341, and Phe348–Pro368.

It belongs to the cytochrome b family. As to quaternary structure, the cytochrome bc1 complex contains 11 subunits: 3 respiratory subunits (MT-CYB, CYC1 and UQCRFS1), 2 core proteins (UQCRC1 and UQCRC2) and 6 low-molecular weight proteins (UQCRH/QCR6, UQCRB/QCR7, UQCRQ/QCR8, UQCR10/QCR9, UQCR11/QCR10 and a cleavage product of UQCRFS1). This cytochrome bc1 complex then forms a dimer. Heme b serves as cofactor.

The protein localises to the mitochondrion inner membrane. Component of the ubiquinol-cytochrome c reductase complex (complex III or cytochrome b-c1 complex) that is part of the mitochondrial respiratory chain. The b-c1 complex mediates electron transfer from ubiquinol to cytochrome c. Contributes to the generation of a proton gradient across the mitochondrial membrane that is then used for ATP synthesis. The sequence is that of Cytochrome b (MT-CYB) from Procellaria parkinsoni (Black petrel).